The sequence spans 368 residues: Phosphate acyltransferase (368 aa).

The interval 337 to 368 (LEQAARDASGAGQASPIAGQPAEPYAAQSSKA) is disordered.

It belongs to the PlsX family. As to quaternary structure, homodimer. Probably interacts with PlsY.

It is found in the cytoplasm. It catalyses the reaction a fatty acyl-[ACP] + phosphate = an acyl phosphate + holo-[ACP]. It participates in lipid metabolism; phospholipid metabolism. Catalyzes the reversible formation of acyl-phosphate (acyl-PO(4)) from acyl-[acyl-carrier-protein] (acyl-ACP). This enzyme utilizes acyl-ACP as fatty acyl donor, but not acyl-CoA. The chain is Phosphate acyltransferase from Paraburkholderia phytofirmans (strain DSM 17436 / LMG 22146 / PsJN) (Burkholderia phytofirmans).